The primary structure comprises 570 residues: 15-cis-phytoene desaturase, chloroplastic/chromoplastic (570 aa).

The N-terminal 91 residues, M1–S91, are a transit peptide targeting the chloroplast and chromoplast. Residues G104–G120, A108, E127–S128, K135, H152–I153, and Y158 each bind FAD. A substrate-binding site is contributed by R293. D524 is a binding site for FAD. A substrate-binding site is contributed by A532. FAD is bound at residue M534.

This sequence belongs to the carotenoid/retinoid oxidoreductase family. Homotetramer. FAD serves as cofactor. Expressed more strongly in flowers than in leaves.

It localises to the plastid. It is found in the chloroplast. The protein localises to the chromoplast. Its subcellular location is the membrane. It catalyses the reaction 2 a plastoquinone + 15-cis-phytoene = 9,9',15-tri-cis-zeta-carotene + 2 a plastoquinol. Its pathway is carotenoid biosynthesis; lycopene biosynthesis. Its function is as follows. Converts phytoene into zeta-carotene via the intermediary of phytofluene by the symmetrical introduction of two double bonds at the C-11 and C-11' positions of phytoene with a concomitant isomerization of two neighboring double bonds at the C9 and C9' positions from trans to cis. This chain is 15-cis-phytoene desaturase, chloroplastic/chromoplastic (PDS1), found in Narcissus pseudonarcissus (Daffodil).